The sequence spans 98 residues: uncharacterized protein (98 aa).

This sequence belongs to the CFAP97 family. Expressed in a number of tissues including brain, thymus, lung, heart, liver, spleen, kidney and testis.

This is an uncharacterized protein from Mus musculus (Mouse).